We begin with the raw amino-acid sequence, 476 residues long: MLKVYNTLTRKEEEFKPLNENEVKMYVCGPTVYDHTHLGHGRTYVSFDIIRRYLEHIGYTVNLVINFTDIDDKIIKRSQEKGKNPKELSETFVNVFLNDMATLKVKPADIYPKVTEHIPEIIAFIEKLIEKGFAYKTENGVYFEVKKFENYGKLSNINLEDLISGARIEPSDEKKNPEDFALWKTAKPGEPKWESPFGEGRPGWHIECSAMSSKYLGEQFDIHGGGRDLSFPHHENEIAQSVAYSGKDWVNYWLHTGFVMVNGEKMSKSLGNFITIEDISKEYDPEILRFFFIQRHYRSPIDYTAESMSHVKNNLEKIYNVIENIRISLEKSEKSGIWNENEFLLYDILKNSKHNFYEAMNSDFNTVEALKSVFEVSNGVNKYLSLVKTPSEGLLLKAFDFFKIVGEIFGLFENYFKESSESNDEGFVKFLIELRSDLRLQKNYEMSDKIRDGLKELGYQIEDNPKEGTVFKKINI.

Residue Cys-28 coordinates Zn(2+). The 'HIGH' region motif lies at 30-40; the sequence is PTVYDHTHLGH. Zn(2+) is bound by residues Cys-208, His-233, and Glu-237. Residues 265–269 carry the 'KMSKS' region motif; it reads KMSKS. Lys-268 lines the ATP pocket.

Belongs to the class-I aminoacyl-tRNA synthetase family. It depends on Zn(2+) as a cofactor.

The protein localises to the cytoplasm. It carries out the reaction tRNA(Cys) + L-cysteine + ATP = L-cysteinyl-tRNA(Cys) + AMP + diphosphate. This is Cysteine--tRNA ligase from Methanococcus maripaludis (strain C7 / ATCC BAA-1331).